Here is a 140-residue protein sequence, read N- to C-terminus: Lysozyme D (140 aa).

Positions methionine 1–glycine 18 are cleaved as a signal peptide. In terms of domain architecture, C-type lysozyme spans arginine 19–phenylalanine 140. 4 disulfides stabilise this stretch: cysteine 24-cysteine 139, cysteine 45-cysteine 129, cysteine 80-cysteine 96, and cysteine 92-cysteine 110. Active-site residues include glutamate 50 and aspartate 68.

Belongs to the glycosyl hydrolase 22 family. In terms of tissue distribution, found in the midgut.

The catalysed reaction is Hydrolysis of (1-&gt;4)-beta-linkages between N-acetylmuramic acid and N-acetyl-D-glucosamine residues in a peptidoglycan and between N-acetyl-D-glucosamine residues in chitodextrins.. Functionally, unlikely to play an active role in the humoral immune defense. May have a function in the digestion of bacteria in the food. This chain is Lysozyme D (LysD), found in Drosophila melanogaster (Fruit fly).